The sequence spans 185 residues: Elongation factor P (185 aa).

The protein belongs to the elongation factor P family.

It localises to the cytoplasm. The protein operates within protein biosynthesis; polypeptide chain elongation. Its function is as follows. Involved in peptide bond synthesis. Stimulates efficient translation and peptide-bond synthesis on native or reconstituted 70S ribosomes in vitro. Probably functions indirectly by altering the affinity of the ribosome for aminoacyl-tRNA, thus increasing their reactivity as acceptors for peptidyl transferase. The polypeptide is Elongation factor P (Acetivibrio thermocellus (strain ATCC 27405 / DSM 1237 / JCM 9322 / NBRC 103400 / NCIMB 10682 / NRRL B-4536 / VPI 7372) (Clostridium thermocellum)).